Reading from the N-terminus, the 372-residue chain is Sulfate/thiosulfate import ATP-binding protein CysA (372 aa).

The ABC transporter domain maps to 3-237 (IQVQHVTKRF…PATPFVYGFL (235 aa)). An ATP-binding site is contributed by 35-42 (GPSGCGKT).

Belongs to the ABC transporter superfamily. Sulfate/tungstate importer (TC 3.A.1.6) family. In terms of assembly, the complex is composed of two ATP-binding proteins (CysA), two transmembrane proteins (CysT and CysW) and a solute-binding protein (CysP).

The protein resides in the cell inner membrane. The enzyme catalyses sulfate(out) + ATP + H2O = sulfate(in) + ADP + phosphate + H(+). The catalysed reaction is thiosulfate(out) + ATP + H2O = thiosulfate(in) + ADP + phosphate + H(+). In terms of biological role, part of the ABC transporter complex CysAWTP involved in sulfate/thiosulfate import. Responsible for energy coupling to the transport system. This is Sulfate/thiosulfate import ATP-binding protein CysA from Ralstonia nicotianae (strain ATCC BAA-1114 / GMI1000) (Ralstonia solanacearum).